The sequence spans 119 residues: Large ribosomal subunit protein bL20 (119 aa).

The protein belongs to the bacterial ribosomal protein bL20 family.

Functionally, binds directly to 23S ribosomal RNA and is necessary for the in vitro assembly process of the 50S ribosomal subunit. It is not involved in the protein synthesizing functions of that subunit. The sequence is that of Large ribosomal subunit protein bL20 from Delftia acidovorans (strain DSM 14801 / SPH-1).